Here is a 166-residue protein sequence, read N- to C-terminus: NAD(P)H-quinone oxidoreductase subunit I, chloroplastic (166 aa).

4Fe-4S ferredoxin-type domains are found at residues 55–84 (GRIH…VDWK) and 95–124 (LNYS…MTEE). [4Fe-4S] cluster-binding residues include cysteine 64, cysteine 67, cysteine 70, cysteine 74, cysteine 104, cysteine 107, cysteine 110, and cysteine 114.

Belongs to the complex I 23 kDa subunit family. As to quaternary structure, NDH is composed of at least 16 different subunits, 5 of which are encoded in the nucleus. Requires [4Fe-4S] cluster as cofactor.

It localises to the plastid. The protein resides in the chloroplast thylakoid membrane. The catalysed reaction is a plastoquinone + NADH + (n+1) H(+)(in) = a plastoquinol + NAD(+) + n H(+)(out). It carries out the reaction a plastoquinone + NADPH + (n+1) H(+)(in) = a plastoquinol + NADP(+) + n H(+)(out). Functionally, NDH shuttles electrons from NAD(P)H:plastoquinone, via FMN and iron-sulfur (Fe-S) centers, to quinones in the photosynthetic chain and possibly in a chloroplast respiratory chain. The immediate electron acceptor for the enzyme in this species is believed to be plastoquinone. Couples the redox reaction to proton translocation, and thus conserves the redox energy in a proton gradient. In Tridax balbisioides (Coatbuttons), this protein is NAD(P)H-quinone oxidoreductase subunit I, chloroplastic.